A 137-amino-acid polypeptide reads, in one-letter code: Probable disulfide formation protein C (137 aa).

A helical membrane pass occupies residues 6 to 25 (ENLMLGSWLTALTAMLGSLY). Cys-35 and Cys-38 form a disulfide bridge. The next 2 helical transmembrane spans lie at 40 to 59 (YQRI…YLKR) and 66 to 83 (YSLW…YHYS). A disulfide bond links Cys-97 and Cys-102. A helical transmembrane segment spans residues 111-133 (GFVTIPFLAFTAFVIIFICSLLI).

It belongs to the DsbB family. BdbC subfamily.

The protein resides in the cell membrane. Required for disulfide bond formation in some proteins. This Halalkalibacterium halodurans (strain ATCC BAA-125 / DSM 18197 / FERM 7344 / JCM 9153 / C-125) (Bacillus halodurans) protein is Probable disulfide formation protein C.